We begin with the raw amino-acid sequence, 631 residues long: Phosphomethylpyrimidine synthase (631 aa).

Substrate is bound by residues asparagine 239, methionine 268, tyrosine 297, histidine 333, 353 to 355 (SRG), 394 to 397 (DGLR), and glutamate 433. Position 437 (histidine 437) interacts with Zn(2+). Tyrosine 460 is a substrate binding site. Histidine 501 lines the Zn(2+) pocket. Residues cysteine 581, cysteine 584, and cysteine 589 each coordinate [4Fe-4S] cluster.

It belongs to the ThiC family. Homodimer. [4Fe-4S] cluster serves as cofactor.

The enzyme catalyses 5-amino-1-(5-phospho-beta-D-ribosyl)imidazole + S-adenosyl-L-methionine = 4-amino-2-methyl-5-(phosphooxymethyl)pyrimidine + CO + 5'-deoxyadenosine + formate + L-methionine + 3 H(+). It functions in the pathway cofactor biosynthesis; thiamine diphosphate biosynthesis. Its function is as follows. Catalyzes the synthesis of the hydroxymethylpyrimidine phosphate (HMP-P) moiety of thiamine from aminoimidazole ribotide (AIR) in a radical S-adenosyl-L-methionine (SAM)-dependent reaction. The chain is Phosphomethylpyrimidine synthase from Escherichia coli O6:H1 (strain CFT073 / ATCC 700928 / UPEC).